Consider the following 252-residue polypeptide: MGTVSETSKEQFVKKNKLAICAILRDLQKNDTAVMVTHARGQFISRILDIQPETNQFIFDFGSVENENVLALGAEQLTIIVEPTGAKIEFTCNKLKHVEYLSLPAFSSAIPEQLYFIQRREYFRVSIPQWPAYYCSGKFPDGTQYKYTLADISLGGMGLYAMKGSEFPLQGCSVLRDAAVDLCGFGLFKLDLQFIRALDKQVVNNKGETLTVQRLSFKFLRLSPIQEKGLQRAIFELEKQQTAKARKFQEGL.

The region spanning 118–236 is the PilZ domain; that stretch reads QRREYFRVSI…EKGLQRAIFE (119 aa).

This sequence belongs to the YcgR family. Monomer. Interacts with the flagellar basal bodies.

It is found in the bacterial flagellum basal body. Its function is as follows. Acts as a flagellar brake, regulating swimming and swarming in a bis-(3'-5') cyclic diguanylic acid (c-di-GMP)-dependent manner. Binds 1 c-di-GMP dimer per subunit. Increasing levels of c-di-GMP lead to decreased motility. This chain is Flagellar brake protein YcgR, found in Yersinia pseudotuberculosis serotype I (strain IP32953).